The chain runs to 1208 residues: Neural cell adhesion molecule L1-like protein (1208 aa).

Residues 1-24 (MEPLLLGRGLIVYLMFLLLKFSKA) form the signal peptide. Residues 25-1082 (IEIPSSVQQV…LYDDISTQGW (1058 aa)) lie on the Extracellular side of the membrane. Ig-like C2-type domains follow at residues 35–124 (PTII…EEIE) and 128–223 (PSVP…MKLT). Cystine bridges form between Cys-57/Cys-109 and Cys-153/Cys-204. Residues Lys-231 and Asn-299 are each glycosylated (N-linked (GlcNAc...) asparagine). Ig-like C2-type domains lie at 235-328 (PKLL…VIVE), 331-417 (PRWT…ANID), 423-510 (PLIQ…ANLD), and 515-607 (TKLR…TQVT). Intrachain disulfides connect Cys-262–Cys-310, Cys-352–Cys-401, Cys-445–Cys-494, and Cys-536–Cys-591. Asn-476 and Asn-482 each carry an N-linked (GlcNAc...) asparagine glycan. The DGEA signature appears at 555 to 558 (DGEA). Asn-562 and Asn-580 each carry an N-linked (GlcNAc...) asparagine glycan. Fibronectin type-III domains follow at residues 614 to 709 (PPEN…TPPA), 714 to 807 (NPQN…SGED), 809 to 914 (PDTA…TPEG), and 918 to 1015 (QPTF…LGEG). The tract at residues 693 to 716 (GRSQPSQPSDHHETPPAAPDRNPQ) is disordered. N-linked (GlcNAc...) asparagine glycosylation is found at Asn-767, Asn-822, Asn-945, and Asn-1026. A helical membrane pass occupies residues 1083–1103 (FIGLMCAIALLTLLLLTVCFV). Over 1104–1208 (KRNRGGKYSV…SSTATFPLRA (105 aa)) the chain is Cytoplasmic. The disordered stretch occupies residues 1131–1163 (ETFGEYSDSDEKPLKGSLRSLNRDMQPTESADS). Phosphoserine occurs at positions 1147, 1160, and 1180. Residues 1149-1161 (RSLNRDMQPTESA) are compositionally biased toward polar residues. An FIG[AQ]Y motif is present at residues 1181–1185 (FIGAY). The interval 1189–1208 (KEKGSVESNGSSTATFPLRA) is disordered. Residues 1194–1208 (VESNGSSTATFPLRA) are compositionally biased toward polar residues.

Belongs to the immunoglobulin superfamily. L1/neurofascin/NgCAM family. May interact with L1CAM. May interact with ITGB1/ITGA1 heterodimer and ITGB1/ITGA2 heterodimer as well as with ANK3. Cleavage by metalloprotease ADAM8 in the extracellular part generates 2 soluble forms (125 kDa and 165 kDa) in vitro and is inhibited by metalloprotease inhibitors. Cleaved by BACE1. In terms of processing, N-glycosylated. Contains N-linked oligosaccharides with a sulfated carbohydrate structure type HNK-1 (SO4-3-GlcUABeta1,3GalBeta1,4GlcNAc). Post-translationally, O-glycosylated. As to expression, expressed in the fetal and adult brain as well as in Schwann cell culture. Also detected in adult peripheral tissues.

Its subcellular location is the cell membrane. The protein localises to the secreted. The protein resides in the extracellular space. It localises to the extracellular matrix. Functionally, extracellular matrix and cell adhesion protein that plays a role in nervous system development and in synaptic plasticity. Both soluble and membranous forms promote neurite outgrowth of cerebellar and hippocampal neurons and suppress neuronal cell death. Plays a role in neuronal positioning of pyramidal neurons and in regulation of both the number of interneurons and the efficacy of GABAergic synapses. May play a role in regulating cell migration in nerve regeneration and cortical development. Potentiates integrin-dependent cell migration towards extracellular matrix proteins. Recruits ANK3 to the plasma membrane. This Homo sapiens (Human) protein is Neural cell adhesion molecule L1-like protein (CHL1).